The primary structure comprises 291 residues: Formamidopyrimidine-DNA glycosylase (291 aa).

Catalysis depends on P2, which acts as the Schiff-base intermediate with DNA. E3 serves as the catalytic Proton donor. The active-site Proton donor; for beta-elimination activity is the K58. Positions 100, 123, and 166 each coordinate DNA. The segment at 257–291 adopts an FPG-type zinc-finger fold; it reads SVYGREGKECLHCGIPIVRILQSGRSSFYCSQCQK. R281 serves as the catalytic Proton donor; for delta-elimination activity.

This sequence belongs to the FPG family. Monomer. It depends on Zn(2+) as a cofactor.

It catalyses the reaction Hydrolysis of DNA containing ring-opened 7-methylguanine residues, releasing 2,6-diamino-4-hydroxy-5-(N-methyl)formamidopyrimidine.. It carries out the reaction 2'-deoxyribonucleotide-(2'-deoxyribose 5'-phosphate)-2'-deoxyribonucleotide-DNA = a 3'-end 2'-deoxyribonucleotide-(2,3-dehydro-2,3-deoxyribose 5'-phosphate)-DNA + a 5'-end 5'-phospho-2'-deoxyribonucleoside-DNA + H(+). Functionally, involved in base excision repair of DNA damaged by oxidation or by mutagenic agents. Acts as a DNA glycosylase that recognizes and removes damaged bases. Has a preference for oxidized purines, such as 7,8-dihydro-8-oxoguanine (8-oxoG). Has AP (apurinic/apyrimidinic) lyase activity and introduces nicks in the DNA strand. Cleaves the DNA backbone by beta-delta elimination to generate a single-strand break at the site of the removed base with both 3'- and 5'-phosphates. The protein is Formamidopyrimidine-DNA glycosylase of Bartonella henselae (strain ATCC 49882 / DSM 28221 / CCUG 30454 / Houston 1) (Rochalimaea henselae).